The sequence spans 498 residues: MRINPTTSDPEVSIREKKNLGRIAQIIGPVLDVAFPPGKMPNIYNALVVKGRDTLGQEINVTCEVQQLLGNNRVRAVAMSATEGLKRGMDVVDMGNPLSVPVGGATLGRIFNVLGEPVDNLGPVDTRTTSPIHKSAPAFIELDTKLSIFETGIKVVDLLAPYRRGGKIGLFGGAGVGKTVLIMELINNIAKAHGGVSVFGGVGERTREGNDLYMEMKESGVINEQNLAESKVALVYGQMNEPPGARMRVGLTALTMAEYFRDVNEQDVLLFIDNIFRFVQAGSEVSALLGRMPSAVGYQPTLSTEMGTLQERITSTKKGSITSIQAVYVPADDLTDPAPATTFAHLDATTVLSRGLAAKGIYPAVDPLDSTSTMLQPRIVGEEHYETAQQVKQTLQRYKELQDIIAILGLDELSEEDRLTVARARKIERFLSQPFFVAEVFTGSPGKYVGLAETIRGFKLILSGEFDSLPEQAFYLVGNIDEATAKATNLEMESKLKK.

T6 is modified (phosphothreonine). The residue at position 13 (S13) is a Phosphoserine. ATP is bound at residue 172 to 179 (GGAGVGKT).

This sequence belongs to the ATPase alpha/beta chains family. F-type ATPases have 2 components, CF(1) - the catalytic core - and CF(0) - the membrane proton channel. CF(1) has five subunits: alpha(3), beta(3), gamma(1), delta(1), epsilon(1). CF(0) has four main subunits: a(1), b(1), b'(1) and c(9-12).

It localises to the plastid. It is found in the chloroplast thylakoid membrane. It catalyses the reaction ATP + H2O + 4 H(+)(in) = ADP + phosphate + 5 H(+)(out). Functionally, produces ATP from ADP in the presence of a proton gradient across the membrane. The catalytic sites are hosted primarily by the beta subunits. In Crucihimalaya wallichii (Rock-cress), this protein is ATP synthase subunit beta, chloroplastic.